The primary structure comprises 179 residues: Large ribosomal subunit protein uL6 (179 aa).

This sequence belongs to the universal ribosomal protein uL6 family. As to quaternary structure, part of the 50S ribosomal subunit.

This protein binds to the 23S rRNA, and is important in its secondary structure. It is located near the subunit interface in the base of the L7/L12 stalk, and near the tRNA binding site of the peptidyltransferase center. The polypeptide is Large ribosomal subunit protein uL6 (Syntrophobacter fumaroxidans (strain DSM 10017 / MPOB)).